Here is a 761-residue protein sequence, read N- to C-terminus: Polyribonucleotide nucleotidyltransferase (761 aa).

Mg(2+)-binding residues include Asp-532 and Asp-538. In terms of domain architecture, KH spans 598–657 (PRVISVQIPVDKIGELIGPKGKTINAIQDETGADISIDEDGTVYIGAVDGPSAEAARAQV). Positions 669-741 (GEQFLGTVVK…DRGKLSLAPV (73 aa)) constitute an S1 motif domain.

The protein belongs to the polyribonucleotide nucleotidyltransferase family. It depends on Mg(2+) as a cofactor.

Its subcellular location is the cytoplasm. It catalyses the reaction RNA(n+1) + phosphate = RNA(n) + a ribonucleoside 5'-diphosphate. Its function is as follows. Involved in mRNA degradation. Catalyzes the phosphorolysis of single-stranded polyribonucleotides processively in the 3'- to 5'-direction. This is Polyribonucleotide nucleotidyltransferase from Leifsonia xyli subsp. xyli (strain CTCB07).